The following is a 398-amino-acid chain: Metalloprotease MmpA (398 aa).

Residue His-22 participates in Zn(2+) binding. The active site involves Glu-23. His-26 is a Zn(2+) binding site. The next 3 membrane-spanning stretches (helical) occupy residues 117-139 (FIAVAGPMANFILAILVFAVILV), 316-338 (QFWLIASLSVSIGFMNLLPIPVL), and 362-381 (AAGFRAGLALILGFMLFAAW). A PDZ domain is found at 130–203 (AILVFAVILV…MPIDFAVERD (74 aa)).

It belongs to the peptidase M50B family. Zn(2+) serves as cofactor.

It localises to the cell inner membrane. Involved in the regulated intramembrane proteolysis (RIP) of the short isoform of PodJ protein (PodJS), during the swarmer-to-stalked transition. The cleavage occurs near or within the single transmembrane of PodJS thereby releasing the N-terminal segment into the cytoplasm for subsequent degradation. It contributes to preserve asymmetry in the next cell cycle through sequential degradation. The protein is Metalloprotease MmpA (mmpA) of Caulobacter vibrioides (strain ATCC 19089 / CIP 103742 / CB 15) (Caulobacter crescentus).